The following is a 634-amino-acid chain: DNA mismatch repair protein MutL (634 aa).

The interval 406–427 (HTHHNDTKGSVHTKSFSARSSS) is disordered.

Belongs to the DNA mismatch repair MutL/HexB family.

This protein is involved in the repair of mismatches in DNA. It is required for dam-dependent methyl-directed DNA mismatch repair. May act as a 'molecular matchmaker', a protein that promotes the formation of a stable complex between two or more DNA-binding proteins in an ATP-dependent manner without itself being part of a final effector complex. The chain is DNA mismatch repair protein MutL from Anaplasma phagocytophilum (strain HZ).